Reading from the N-terminus, the 594-residue chain is Protein CBFA2T2 (594 aa).

A Phosphoserine modification is found at Ser24. A Glycyl lysine isopeptide (Lys-Gly) (interchain with G-Cter in SUMO2) cross-link involves residue Lys29. The interval 48–96 (GGPRPVSFTPTALSNGINHSPPTLNGAPSPPQRFSNGPASSTSSALTNQ) is disordered. Polar residues-rich tracts occupy residues 55 to 70 (FTPT…SPPT) and 79 to 96 (QRFS…LTNQ). The interval 98-206 (LPATCGARQL…QHEHLLLNTS (109 aa)) is interaction with PRDM14. The TAFH domain maps to 104–199 (ARQLSKLKRF…TPSQYLAQHE (96 aa)). The disordered stretch occupies residues 220-257 (VHGNGKRPSPERRDENNFERDTVPPEPPAKRVCTISPA). A compositionally biased stretch (basic and acidic residues) spans 227 to 242 (PSPERRDENNFERDTV). Ser255 bears the Phosphoserine mark. The segment at 322–368 (QDELVDHRLTEREWADEWKHLDHALNCIMEMVEKTRRSMAVLRRCQE) is nervy homology region 2 (NHR2). The disordered stretch occupies residues 388–416 (RKTGTELVSRQHSPGSTDSLSNDSQREFT). The span at 393-410 (ELVSRQHSPGSTDSLSND) shows a compositional bias: polar residues. A Phosphoserine modification is found at Ser400. Residues 426-475 (VEFWKKTEEAVNKVKIQAMSEVQKAVAEAEQKAFEVIATERARMEQTIAD) are nervy homology region 3 (NHR3). Lys440 is covalently cross-linked (Glycyl lysine isopeptide (Lys-Gly) (interchain with G-Cter in SUMO2)). Residues 442–482 (QAMSEVQKAVAEAEQKAFEVIATERARMEQTIADVKRQAAE) are a coiled coil. Zn(2+) is bound by residues Cys498, Cys501, Cys509, Cys512, Cys518, Cys522, His530, and Cys534. An MYND-type zinc finger spans residues 498–534 (CWNCGRKASETCSGCNIARYCGSFCQHKDWERHHRLC). The disordered stretch occupies residues 538-594 (LHGHSPHSQSRPLLPGGRGSARSADCSVPSPALDKTSATTSRSSTPASVTAIDANGL). Ser567 bears the Phosphoserine mark. Residues 573–588 (TSATTSRSSTPASVTA) show a composition bias toward low complexity.

This sequence belongs to the CBFA2T family. As to quaternary structure, homooligomer. Homotetramerization is mediated by the NHR2 domain. Interacts with CBFA2T3/MTG16. Can interact with RUNX1T1/CBFA2T1. Heterotetramerization between members of the CBFA2T family is proposed. Interacts with RBP, GFI1, TCF4, PRDM14. Interacts with TAL1 and CBFA2T3/MTG16; the heteromer with CBFA2T3/MTG16 may function in repression of TAL1. In terms of tissue distribution, expressed in embryonic stem cells.

Its subcellular location is the nucleus. Functionally, transcriptional corepressor which facilitates transcriptional repression via its association with DNA-binding transcription factors and recruitment of other corepressors and histone-modifying enzymes. Via association with PRDM14 is involved in regulation of embryonic stem cell (ESC) pluripotency. Involved in primordial germ cell (PCG) formation. Stabilizes PRDM14 and OCT4 on chromatin in a homooligomerization-dependent mannerCan repress the expression of MMP7 in a ZBTB33-dependent manner. Through heteromerization with CBFA2T3/MTG16 may be involved in regulation of the proliferation and the differentiation of erythroid progenitors by repressing the expression of TAL1 target genes. Required for the maintenance of the secretory cell lineage in the small intestine. Can inhibit Notch signaling probably by association with RBPJ and may be involved in GFI1-mediated Paneth cell differentiation. This is Protein CBFA2T2 (Cbfa2t2) from Mus musculus (Mouse).